A 537-amino-acid chain; its full sequence is MADTIHWADVIAEDVLKKNGKHLVATGITPSGNIHIGNMREVVTADAVYRALVDKGANADFIYIADNYDPLRKVYPFLPESYVEHVGKPISEIPCPCGNCANYAEHFLKPFLEALRRLGINPKVYRADEMYKTGKYTEAIKTALVKRDAIAKILEEVSGKTVASDWSPFNPRCDQCGRITTTKVTGFDLEAETVDYVCACEHSGTVPMAGGGKLTWRVDWPARWSVLGVTVEPFGKDHASRGGSYDTGKRIVKEIFGHEPPYPIVYEWIMLGKQGAMSSSTGVVVSISDMLKIVPPEVLRYLIIRTKPEKHIQFDPGQPLLSLVDEYERLRTQFRENDPSLGTFQGRVYELSRATGVCQSEIPFKQMVTIYQVARGDFDQVLKIVKRSGFSTEDKKCIKELADNVSKWLKLYAPPFAKFKVKEKVPVQAATLSELQRAFLSAFAALIESRDEISGEEYHMLVYSAKDEGSELNRRIAEKLNAHAPQVDPRELFKAIYISLLGQSSGPKAGWFLSSFEKEFLVERFEEASNYSPEINV.

The 'HIGH' region signature appears at 30–38; that stretch reads PSGNIHIGN. A 'KMSKS' region motif is present at residues 276 to 280; it reads AMSSS.

It belongs to the class-I aminoacyl-tRNA synthetase family.

It is found in the cytoplasm. It carries out the reaction tRNA(Lys) + L-lysine + ATP = L-lysyl-tRNA(Lys) + AMP + diphosphate. The polypeptide is Lysine--tRNA ligase (Methanosarcina barkeri).